Here is a 635-residue protein sequence, read N- to C-terminus: Threonine--tRNA ligase (635 aa).

The interval 1–152 (MQLLLIHSDY…AKAAVKPEAA (152 aa)) is editing domain. The tract at residues 215-514 (PHVELMRRLE…TEEGKVPMLP (300 aa)) is catalytic. Cys-307, His-359, and His-483 together coordinate Zn(2+).

Belongs to the class-II aminoacyl-tRNA synthetase family. As to quaternary structure, homodimer. Requires Zn(2+) as cofactor.

It localises to the cytoplasm. It carries out the reaction tRNA(Thr) + L-threonine + ATP = L-threonyl-tRNA(Thr) + AMP + diphosphate + H(+). Its function is as follows. Catalyzes the attachment of threonine to tRNA(Thr) in a two-step reaction: L-threonine is first activated by ATP to form Thr-AMP and then transferred to the acceptor end of tRNA(Thr). Also edits incorrectly charged L-seryl-tRNA(Thr). The polypeptide is Threonine--tRNA ligase (Methanosarcina acetivorans (strain ATCC 35395 / DSM 2834 / JCM 12185 / C2A)).